The sequence spans 187 residues: Threonylcarbamoyl-AMP synthase (187 aa).

The 185-residue stretch at E3–G187 folds into the YrdC-like domain.

The protein belongs to the SUA5 family. TsaC subfamily.

The protein resides in the cytoplasm. It catalyses the reaction L-threonine + hydrogencarbonate + ATP = L-threonylcarbamoyladenylate + diphosphate + H2O. Functionally, required for the formation of a threonylcarbamoyl group on adenosine at position 37 (t(6)A37) in tRNAs that read codons beginning with adenine. Catalyzes the conversion of L-threonine, HCO(3)(-)/CO(2) and ATP to give threonylcarbamoyl-AMP (TC-AMP) as the acyladenylate intermediate, with the release of diphosphate. In Shewanella halifaxensis (strain HAW-EB4), this protein is Threonylcarbamoyl-AMP synthase.